Here is a 429-residue protein sequence, read N- to C-terminus: Ribosomal RNA small subunit methyltransferase B (429 aa).

S-adenosyl-L-methionine is bound by residues 254 to 260 (CAAPGGK), aspartate 277, aspartate 303, and aspartate 322. Catalysis depends on cysteine 375, which acts as the Nucleophile.

The protein belongs to the class I-like SAM-binding methyltransferase superfamily. RsmB/NOP family.

It localises to the cytoplasm. It catalyses the reaction cytidine(967) in 16S rRNA + S-adenosyl-L-methionine = 5-methylcytidine(967) in 16S rRNA + S-adenosyl-L-homocysteine + H(+). Its function is as follows. Specifically methylates the cytosine at position 967 (m5C967) of 16S rRNA. In Escherichia coli O17:K52:H18 (strain UMN026 / ExPEC), this protein is Ribosomal RNA small subunit methyltransferase B.